The chain runs to 141 residues: Large ribosomal subunit protein uL11c (141 aa).

This sequence belongs to the universal ribosomal protein uL11 family. Part of the ribosomal stalk of the 50S ribosomal subunit. Interacts with L10 and the large rRNA to form the base of the stalk. L10 forms an elongated spine to which L12 dimers bind in a sequential fashion forming a multimeric L10(L12)X complex.

It localises to the plastid. Its subcellular location is the chloroplast. Functionally, forms part of the ribosomal stalk which helps the ribosome interact with GTP-bound translation factors. In Guillardia theta (Cryptophyte), this protein is Large ribosomal subunit protein uL11c.